The following is a 379-amino-acid chain: uncharacterized protein (379 aa).

Disordered stretches follow at residues 1–20 (MLPQ…PVGP), 227–290 (VSQR…LQGH), and 331–371 (PGCA…RAGH). A compositionally biased stretch (low complexity) spans 7 to 20 (QVVHGVQDGPPVGP). Positions 249–261 (GCKDPRVRKEPGR) are enriched in basic and acidic residues.

This is an uncharacterized protein from Dryophytes versicolor (chameleon treefrog).